We begin with the raw amino-acid sequence, 218 residues long: Elongation factor Ts (218 aa).

Residues 82–85 are involved in Mg(2+) ion dislocation from EF-Tu; the sequence is TDFV.

Belongs to the EF-Ts family.

The protein resides in the cytoplasm. Functionally, associates with the EF-Tu.GDP complex and induces the exchange of GDP to GTP. It remains bound to the aminoacyl-tRNA.EF-Tu.GTP complex up to the GTP hydrolysis stage on the ribosome. The sequence is that of Elongation factor Ts from Prochlorococcus marinus (strain MIT 9215).